We begin with the raw amino-acid sequence, 207 residues long: Suppressor of IKBKE 1 (207 aa).

Coiled coils occupy residues 4 to 32 (TIDK…LIDQ) and 154 to 193 (DAIQ…SLHS). The segment at 186 to 207 (TSKESLHSSKRESEWNFSEKTQ) is disordered. The segment covering 189–199 (ESLHSSKRESE) has biased composition (basic and acidic residues).

Belongs to the SIKE family. As to quaternary structure, interacts with IKBKE and TBK1 via its coiled coil region. Interaction with TBK1 is disrupted upon viral infection or TLR3 stimulation. Interacts with CDC42BPB. Associates with the STRIPAK core complex composed of PP2A catalytic and scaffolding subunits, the striatins (PP2A regulatory subunits), the striatin-associated proteins MOB4, STRIP1 and STRIP2, PDCD10 and members of the STE20 kinases, such as STK24 and STK26.

In terms of biological role, suppressor of IKK-epsilon. Associates with the striatin-interacting phosphatase and kinase (STRIPAK) core complex, forming the extended (SIKE1:SLMAP)STRIPAK complex. The (SIKE1:SLMAP)STRIPAK complex dephosphorylates STK3 leading to the inhibition of Hippo signaling and the control of cell growth. This is Suppressor of IKBKE 1 (sike1) from Xenopus tropicalis (Western clawed frog).